Reading from the N-terminus, the 210-residue chain is Dephospho-CoA kinase (210 aa).

Residues 4 to 202 (WVGLTGGIGS…AFYSGIFASK (199 aa)) form the DPCK domain. 12-17 (GSGKSA) contacts ATP.

It belongs to the CoaE family.

It localises to the cytoplasm. It catalyses the reaction 3'-dephospho-CoA + ATP = ADP + CoA + H(+). It functions in the pathway cofactor biosynthesis; coenzyme A biosynthesis; CoA from (R)-pantothenate: step 5/5. In terms of biological role, catalyzes the phosphorylation of the 3'-hydroxyl group of dephosphocoenzyme A to form coenzyme A. This chain is Dephospho-CoA kinase, found in Neisseria meningitidis serogroup B (strain ATCC BAA-335 / MC58).